The following is a 176-amino-acid chain: Transcriptional repressor MprA (176 aa).

The HTH marR-type domain occupies E26–S160.

Negative regulator of the multidrug operon emrAB. The sequence is that of Transcriptional repressor MprA (mprA) from Escherichia coli O157:H7.